A 212-amino-acid chain; its full sequence is Peptide methionine sulfoxide reductase MsrA (212 aa).

The active site involves C52.

It belongs to the MsrA Met sulfoxide reductase family.

It catalyses the reaction L-methionyl-[protein] + [thioredoxin]-disulfide + H2O = L-methionyl-(S)-S-oxide-[protein] + [thioredoxin]-dithiol. The enzyme catalyses [thioredoxin]-disulfide + L-methionine + H2O = L-methionine (S)-S-oxide + [thioredoxin]-dithiol. Its function is as follows. Has an important function as a repair enzyme for proteins that have been inactivated by oxidation. Catalyzes the reversible oxidation-reduction of methionine sulfoxide in proteins to methionine. In Salmonella arizonae (strain ATCC BAA-731 / CDC346-86 / RSK2980), this protein is Peptide methionine sulfoxide reductase MsrA.